The following is a 448-amino-acid chain: Methionine aminopeptidase 2-1 (448 aa).

The interval 1–83 (MAAQVIPELQ…TQKAQTEPPR (83 aa)) is disordered. Residues 32-48 (ENEDGDSEDDNGDDQGA) are compositionally biased toward acidic residues. Residues 59–73 (AKKKKKKKPKKKKKD) show a composition bias toward basic residues. H198 contacts substrate. Positions 218, 229, and 298 each coordinate a divalent metal cation. H306 contributes to the substrate binding site. A divalent metal cation is bound by residues E334 and E429.

The protein belongs to the peptidase M24A family. Methionine aminopeptidase eukaryotic type 2 subfamily. Requires Co(2+) as cofactor. Zn(2+) serves as cofactor. The cofactor is Mn(2+). Fe(2+) is required as a cofactor.

Its subcellular location is the cytoplasm. It carries out the reaction Release of N-terminal amino acids, preferentially methionine, from peptides and arylamides.. Functionally, cotranslationally removes the N-terminal methionine from nascent proteins. The N-terminal methionine is often cleaved when the second residue in the primary sequence is small and uncharged (Met-Ala-, Cys, Gly, Pro, Ser, Thr, or Val). This chain is Methionine aminopeptidase 2-1, found in Ajellomyces capsulatus (strain G186AR / H82 / ATCC MYA-2454 / RMSCC 2432) (Darling's disease fungus).